Consider the following 164-residue polypeptide: Crossover junction endodeoxyribonuclease RuvC (164 aa).

Catalysis depends on residues aspartate 7, glutamate 67, and aspartate 139. 3 residues coordinate Mg(2+): aspartate 7, glutamate 67, and aspartate 139.

Belongs to the RuvC family. Homodimer which binds Holliday junction (HJ) DNA. The HJ becomes 2-fold symmetrical on binding to RuvC with unstacked arms; it has a different conformation from HJ DNA in complex with RuvA. In the full resolvosome a probable DNA-RuvA(4)-RuvB(12)-RuvC(2) complex forms which resolves the HJ. Requires Mg(2+) as cofactor.

It localises to the cytoplasm. The enzyme catalyses Endonucleolytic cleavage at a junction such as a reciprocal single-stranded crossover between two homologous DNA duplexes (Holliday junction).. Its function is as follows. The RuvA-RuvB-RuvC complex processes Holliday junction (HJ) DNA during genetic recombination and DNA repair. Endonuclease that resolves HJ intermediates. Cleaves cruciform DNA by making single-stranded nicks across the HJ at symmetrical positions within the homologous arms, yielding a 5'-phosphate and a 3'-hydroxyl group; requires a central core of homology in the junction. The consensus cleavage sequence is 5'-(A/T)TT(C/G)-3'. Cleavage occurs on the 3'-side of the TT dinucleotide at the point of strand exchange. HJ branch migration catalyzed by RuvA-RuvB allows RuvC to scan DNA until it finds its consensus sequence, where it cleaves and resolves the cruciform DNA. The polypeptide is Crossover junction endodeoxyribonuclease RuvC (Geobacter sulfurreducens (strain ATCC 51573 / DSM 12127 / PCA)).